The sequence spans 320 residues: Malate dehydrogenase 2 (320 aa).

NAD(+)-binding positions include 10–15 and Asp-34; that span reads GAGQIG. Substrate is bound by residues Arg-83 and Arg-89. Residues Asn-96 and 119–121 each bind NAD(+); that span reads ITN. Substrate contacts are provided by Asn-121 and Arg-152. The active-site Proton acceptor is the His-176.

The protein belongs to the LDH/MDH superfamily. MDH type 3 family.

The enzyme catalyses (S)-malate + NAD(+) = oxaloacetate + NADH + H(+). In terms of biological role, catalyzes the reversible oxidation of malate to oxaloacetate. This chain is Malate dehydrogenase 2, found in Rhodopseudomonas palustris (strain BisB18).